Here is a 65-residue protein sequence, read N- to C-terminus: Large ribosomal subunit protein bL33c (65 aa).

This sequence belongs to the bacterial ribosomal protein bL33 family.

Its subcellular location is the plastid. The protein localises to the chloroplast. This is Large ribosomal subunit protein bL33c (rpl33) from Porphyra purpurea (Red seaweed).